Consider the following 936-residue polypeptide: Phosphoenolpyruvate carboxylase (936 aa).

Catalysis depends on residues His-155 and Lys-595.

Belongs to the PEPCase type 1 family. As to quaternary structure, homotetramer. Requires Mg(2+) as cofactor. Mn(2+) serves as cofactor.

The catalysed reaction is oxaloacetate + phosphate = phosphoenolpyruvate + hydrogencarbonate. Its activity is regulated as follows. Exhibits positive allosteric property with acetyl-CoA and fructose 1,6-bisphosphate, and a negative one with L-aspartate and L-malate. In terms of biological role, forms oxaloacetate, a four-carbon dicarboxylic acid source for the tricarboxylic acid cycle. The chain is Phosphoenolpyruvate carboxylase (ppc) from Rhodothermus marinus (Rhodothermus obamensis).